A 466-amino-acid polypeptide reads, in one-letter code: Glutamate--tRNA ligase 1 (466 aa).

The short motif at 9-19 (PSPTGYLHIGG) is the 'HIGH' region element. Zn(2+)-binding residues include C98, C100, C125, and E127. Positions 236-240 (KLSKR) match the 'KMSKS' region motif. K239 is a binding site for ATP.

It belongs to the class-I aminoacyl-tRNA synthetase family. Glutamate--tRNA ligase type 1 subfamily. As to quaternary structure, monomer. The cofactor is Zn(2+).

The protein localises to the cytoplasm. The catalysed reaction is tRNA(Glu) + L-glutamate + ATP = L-glutamyl-tRNA(Glu) + AMP + diphosphate. In terms of biological role, catalyzes the attachment of glutamate to tRNA(Glu) in a two-step reaction: glutamate is first activated by ATP to form Glu-AMP and then transferred to the acceptor end of tRNA(Glu). The sequence is that of Glutamate--tRNA ligase 1 from Acidithiobacillus ferrooxidans (strain ATCC 53993 / BNL-5-31) (Leptospirillum ferrooxidans (ATCC 53993)).